The primary structure comprises 562 residues: Sperm-tail PG-rich repeat-containing protein 2 (562 aa).

3 STPGR repeats span residues 21–31, 60–73, and 96–118; these read GPGTYNINRSL, SPGP…ITRN, and PGPG…AKSP. Disordered stretches follow at residues 114 to 136 and 192 to 215; these read KAKS…APSI and SGRR…QEDQ. Over residues 127-136 the composition is skewed to low complexity; it reads PSLSPAAPSI. The span at 193–202 shows a compositional bias: basic and acidic residues; sequence GRREPLKGAD. STPGR repeat units follow at residues 204-227, 253-271, 336-350, 385-409, 425-462, and 478-492; these read PGPG…VKRE, PGPG…SNTH, TPGP…YGLA, TPGP…TAAF, TPPP…SCFL, and TPGP…KSSS. A disordered region spans residues 543–562; sequence STRSLSSHRSWRKPTAHSSA. Over residues 551 to 562 the composition is skewed to basic residues; sequence RSWRKPTAHSSA.

The polypeptide is Sperm-tail PG-rich repeat-containing protein 2 (stpg2) (Danio rerio (Zebrafish)).